A 769-amino-acid chain; its full sequence is 5-methyltetrahydropteroyltriglutamate--homocysteine methyltransferase (769 aa).

Residues 16–19 (RELK) and K118 contribute to the 5-methyltetrahydropteroyltri-L-glutamate site. L-homocysteine contacts are provided by residues 440 to 442 (IGS) and E493. L-methionine is bound by residues 440–442 (IGS) and E493. 5-methyltetrahydropteroyltri-L-glutamate-binding positions include 524–525 (RC) and W570. D608 contributes to the L-homocysteine binding site. D608 contributes to the L-methionine binding site. E614 contacts 5-methyltetrahydropteroyltri-L-glutamate. Residues H650, C652, and E674 each coordinate Zn(2+). Catalysis depends on H706, which acts as the Proton donor. A Zn(2+)-binding site is contributed by C738.

The protein belongs to the vitamin-B12 independent methionine synthase family. The cofactor is Zn(2+).

It carries out the reaction 5-methyltetrahydropteroyltri-L-glutamate + L-homocysteine = tetrahydropteroyltri-L-glutamate + L-methionine. It participates in amino-acid biosynthesis; L-methionine biosynthesis via de novo pathway; L-methionine from L-homocysteine (MetE route): step 1/1. Catalyzes the transfer of a methyl group from 5-methyltetrahydrofolate to homocysteine resulting in methionine formation. This chain is 5-methyltetrahydropteroyltriglutamate--homocysteine methyltransferase, found in Acidiphilium cryptum (strain JF-5).